Reading from the N-terminus, the 239-residue chain is Ribonuclease PH (239 aa).

Residues arginine 87 and 125-127 contribute to the phosphate site; that span reads GTR.

This sequence belongs to the RNase PH family. Homohexameric ring arranged as a trimer of dimers.

It catalyses the reaction tRNA(n+1) + phosphate = tRNA(n) + a ribonucleoside 5'-diphosphate. In terms of biological role, phosphorolytic 3'-5' exoribonuclease that plays an important role in tRNA 3'-end maturation. Removes nucleotide residues following the 3'-CCA terminus of tRNAs; can also add nucleotides to the ends of RNA molecules by using nucleoside diphosphates as substrates, but this may not be physiologically important. Probably plays a role in initiation of 16S rRNA degradation (leading to ribosome degradation) during starvation. The protein is Ribonuclease PH of Saccharophagus degradans (strain 2-40 / ATCC 43961 / DSM 17024).